Here is a 207-residue protein sequence, read N- to C-terminus: Flavin-dependent thymidylate synthase (207 aa).

One can recognise a ThyX domain in the interval 1 to 204; it reads MQITLLFHTP…KFIFEHCLHK (204 aa). Residues Ser-50 and 74-76 each bind FAD; that span reads RHR. Residues 71–74, 84–86, and Lys-143 contribute to the dUMP site; these read EVAR and STR. Residues 74 to 84 carry the ThyX motif motif; the sequence is RHRHTSPSVKS. FAD-binding positions include 159–161 and Asn-165; that span reads NAR. Residue Arg-170 participates in dUMP binding. Arg-170 acts as the Involved in ionization of N3 of dUMP, leading to its activation in catalysis.

This sequence belongs to the thymidylate synthase ThyX family. As to quaternary structure, homotetramer. FAD is required as a cofactor.

It catalyses the reaction dUMP + (6R)-5,10-methylene-5,6,7,8-tetrahydrofolate + NADPH + H(+) = dTMP + (6S)-5,6,7,8-tetrahydrofolate + NADP(+). The protein operates within pyrimidine metabolism; dTTP biosynthesis. Functionally, catalyzes the reductive methylation of 2'-deoxyuridine-5'-monophosphate (dUMP) to 2'-deoxythymidine-5'-monophosphate (dTMP) while utilizing 5,10-methylenetetrahydrofolate (mTHF) as the methyl donor, and NADPH and FADH(2) as the reductant. This Campylobacter jejuni subsp. jejuni serotype O:2 (strain ATCC 700819 / NCTC 11168) protein is Flavin-dependent thymidylate synthase.